Here is a 136-residue protein sequence, read N- to C-terminus: MASIAASASISLQARPRQLAIAASQVKSFSNGRRSSLSFNLRQLPTRLTVSCAAKPETVDKVCAVVRKQLSLKEADEITAATKFAALGADSLDTVEIVMGLEEEFGIEMAEEKAQSIATVEQAAALIEELLFEKAK.

The N-terminal 51 residues, 1–51, are a transit peptide targeting the chloroplast; that stretch reads MASIAASASISLQARPRQLAIAASQVKSFSNGRRSSLSFNLRQLPTRLTVS. The Carrier domain maps to 56-131; that stretch reads PETVDKVCAV…QAAALIEELL (76 aa). The residue at position 91 (S91) is an O-(pantetheine 4'-phosphoryl)serine.

It belongs to the acyl carrier protein (ACP) family. In terms of processing, 4'-phosphopantetheine is transferred from CoA to a specific serine of apo-ACP by acpS. This modification is essential for activity because fatty acids are bound in thioester linkage to the sulfhydryl of the prosthetic group.

It is found in the plastid. Its subcellular location is the chloroplast. Its function is as follows. Carrier of the growing fatty acid chain in fatty acid biosynthesis. The sequence is that of Acyl carrier protein 2, chloroplastic (ACP2) from Arabidopsis thaliana (Mouse-ear cress).